We begin with the raw amino-acid sequence, 105 residues long: Small ribosomal subunit protein uS10 (105 aa).

Belongs to the universal ribosomal protein uS10 family. As to quaternary structure, part of the 30S ribosomal subunit.

In terms of biological role, involved in the binding of tRNA to the ribosomes. This is Small ribosomal subunit protein uS10 from Chlamydia abortus (strain DSM 27085 / S26/3) (Chlamydophila abortus).